The primary structure comprises 112 residues: Small ribosomal subunit protein bS6 (112 aa).

The protein belongs to the bacterial ribosomal protein bS6 family.

Binds together with bS18 to 16S ribosomal RNA. The protein is Small ribosomal subunit protein bS6 (rpsF) of Chlamydia pneumoniae (Chlamydophila pneumoniae).